Consider the following 354-residue polypeptide: Arginase-2, mitochondrial (354 aa).

The transit peptide at 1–22 (MSYGSCVSRLLRTRVQSVLKKS) directs the protein to the mitochondrion. 4 residues coordinate Mn(2+): H120, D143, H145, and D147. Residues 145–149 (HADIN), 156–158 (SGN), and D202 contribute to the substrate site. Residues D251 and D253 each contribute to the Mn(2+) site. The substrate site is built by T265 and E296. The interval 330–354 (GHTVYEQLPPPSSPHESENAERVRI) is disordered. Basic and acidic residues predominate over residues 344 to 354 (HESENAERVRI).

The protein belongs to the arginase family. In terms of assembly, homotrimer. Mn(2+) is required as a cofactor.

The protein localises to the mitochondrion. It carries out the reaction L-arginine + H2O = urea + L-ornithine. It functions in the pathway nitrogen metabolism; urea cycle; L-ornithine and urea from L-arginine: step 1/1. In terms of biological role, may play a role in the regulation of extra-urea cycle arginine metabolism and also in down-regulation of nitric oxide synthesis. Extrahepatic arginase functions to regulate L-arginine bioavailability to nitric oxid synthase (NOS). Arginine metabolism is a critical regulator of innate and adaptive immune responses. Seems to be involved in negative regulation of the survival capacity of activated T cells. May suppress inflammation-related signaling in asthmatic airway epithelium. May play a role in promoting prenatal immune suppression. Regulates RPS6KB1 signaling, which promotes endothelial cell senescence and inflammation and implicates NOS3/eNOS dysfunction. Can inhibit endothelial autophagy independently of its enzymatic activity implicating mTORC2 signaling. Involved in vascular smooth muscle cell senescence and apoptosis independently of its enzymatic activity. The polypeptide is Arginase-2, mitochondrial (ARG2) (Oryctolagus cuniculus (Rabbit)).